We begin with the raw amino-acid sequence, 408 residues long: Alpha-2Da adrenergic receptor (408 aa).

Topologically, residues 1 to 30 (MSVTPTANSTEEAANITASPRLWPYTEPAS) are extracellular. N-linked (GlcNAc...) asparagine glycosylation is found at Asn8 and Asn15. A helical transmembrane segment spans residues 31-55 (AIIILVVSLIILLTIVGNVLVIVAV). The Cytoplasmic portion of the chain corresponds to 56–67 (LTSRALRAPQNL). The helical transmembrane segment at 68–93 (FLVSLACADILVATLVIPFSLANEIM) threads the bilayer. Over 94-103 (GYWYFGSTWC) the chain is Extracellular. A disulfide bridge links Cys103 with Cys176. The helical transmembrane segment at 104 to 126 (AFYLALDVLFCTSSIVHLCAISL) threads the bilayer. Over 127-147 (DRYWSVTKAVRYNLKRTPRRI) the chain is Cytoplasmic. A helical membrane pass occupies residues 148–170 (KCMIAVVWLISAVISFPPLIMTK). The Extracellular segment spans residues 171-181 (HDEKECLINDE). The helical transmembrane segment at 182 to 205 (TWYILSSCAVSFFAPGLIMITVYC) threads the bilayer. The Cytoplasmic segment spans residues 206-332 (KIYRVAKQRS…QMREKRFTFV (127 aa)). Residues 242 to 306 (FEKESPSSNS…SCRVSWAAHQ (65 aa)) form a disordered region. Over residues 260-270 (ELDDIDLEESA) the composition is skewed to acidic residues. A compositionally biased stretch (basic residues) spans 277-286 (RGSRFSKRRR). The chain crosses the membrane as a helical span at residues 333 to 356 (LAVVMGVFVLCWFPFFFTYSLQAV). The Extracellular segment spans residues 357-369 (CGERCGPPEALFK). Residues 370-390 (LFFWIGYCNSSVNPIIYTIFN) traverse the membrane as a helical segment. The Cytoplasmic portion of the chain corresponds to 391-408 (RDFRKAFKKVVCWSAQRT).

It belongs to the G-protein coupled receptor 1 family. Adrenergic receptor subfamily. ADRA2D sub-subfamily.

The protein resides in the cell membrane. In terms of biological role, alpha-2 adrenergic receptors mediate the catecholamine-induced inhibition of adenylate cyclase through the action of G proteins. The order of potency for this receptor is dexmedetomidine &gt; norepinephrine &gt; epinephrine &gt; oxymetazoline. The sequence is that of Alpha-2Da adrenergic receptor (adra2da) from Danio rerio (Zebrafish).